Reading from the N-terminus, the 68-residue chain is Neuronal regeneration-related protein (68 aa).

Residues 21-54 are disordered; it reads MEGRLPKGRLPVPKEVNRKKNDETNAASLTPLGS. The span at 44-54 shows a compositional bias: polar residues; that stretch reads TNAASLTPLGS.

In terms of assembly, interacts with the latency-associated peptides (LAP) of TGFB1 and TGFB2; the interaction results in a decrease in TGFB autoinduction. Interacts with FLNA. Post-translationally, phosphorylated on Ser-59. Phosphorylation decreases stability and activity.

Its subcellular location is the cytoplasm. May have roles in neural function and cellular differentiation. Ectopic expression promotes axonal regeneration, induces differentiation of fibroblast into myofibroblast, induces myofibroblast ameboid migration, augments motility of gliomas, and increases retinoic-acid regulation of lipid-droplet biogenesis. Down-regulates the expression of TGFB1 and TGFB2 but not of TGFB3. May play a role in the regulation of alveolar generation. This is Neuronal regeneration-related protein (NREP) from Macaca fascicularis (Crab-eating macaque).